Consider the following 44-residue polypeptide: Protein PsbN (44 aa).

The helical transmembrane segment at 6 to 26 (FFYGVFLWCLLISVTGYSIYI) threads the bilayer.

Belongs to the PsbN family.

It is found in the plastid. The protein localises to the chloroplast thylakoid membrane. Its function is as follows. May play a role in photosystem I and II biogenesis. This chain is Protein PsbN, found in Ostreococcus tauri.